Consider the following 80-residue polypeptide: Defensin coprisin (80 aa).

A signal peptide spans 1-20 (MAKLIAFALVASLCLSMVLC). Residues 21-37 (NPLPEEVQEEGLVRQKR) constitute a propeptide that is removed on maturation. 3 disulfide bridges follow: C40-C71, C57-C76, and C61-C78.

The protein belongs to the invertebrate defensin family. Type 1 subfamily.

The protein localises to the secreted. Its subcellular location is the target cell membrane. Potent broad-spectrum antibacterial peptide against both Gram-positive (B.subtilis, S.epidermidis, and S.aureus) and Gram-negative bacteria (E.coli, S.typhimurium, and P.aeruginosa). Is also active against all antibiotic-resistant bacterial strains tested. Induces apoptosis in C.albicans, but does not disrupt the fungal plasma membrane at all. Acts by permeabilizing the bacterial cell membrane, but not human membranes. Also shows potent anti-inflammatory activities, since it reduces both LPS-induced nitric oxide release and pro-inflammatory cytokine production. Anti-inflammatory activities are initiated by suppressing the binding of LPS to toll-like receptor 4 (TLR4), and subsequently inhibiting the phosphorylation of p38 mitogen-activated protein kinase (MAPK) and nuclear translocation of NF-kB (TNFRSF11A). Does not show hemolytic activity against human erythrocytes. The polypeptide is Defensin coprisin (Copris tripartitus (Dung beetle)).